Here is a 145-residue protein sequence, read N- to C-terminus: 3-dehydroquinate dehydratase (145 aa).

The active-site Proton acceptor is the Tyr-24. Substrate-binding residues include Asn-75, His-81, and Asp-88. His-101 acts as the Proton donor in catalysis. Substrate-binding positions include 102–103 and Arg-112; that span reads IS.

This sequence belongs to the type-II 3-dehydroquinase family. As to quaternary structure, homododecamer.

The catalysed reaction is 3-dehydroquinate = 3-dehydroshikimate + H2O. It participates in metabolic intermediate biosynthesis; chorismate biosynthesis; chorismate from D-erythrose 4-phosphate and phosphoenolpyruvate: step 3/7. In terms of biological role, catalyzes a trans-dehydration via an enolate intermediate. The polypeptide is 3-dehydroquinate dehydratase (Rhizobium etli (strain CIAT 652)).